The chain runs to 78 residues: Large ribosomal subunit protein bL28 (78 aa).

Belongs to the bacterial ribosomal protein bL28 family.

The polypeptide is Large ribosomal subunit protein bL28 (Salmonella choleraesuis (strain SC-B67)).